Reading from the N-terminus, the 307-residue chain is Elongation factor Ts (307 aa).

Residues 80-83 (TDFV) form an involved in Mg(2+) ion dislocation from EF-Tu region.

The protein belongs to the EF-Ts family.

The protein localises to the cytoplasm. Functionally, associates with the EF-Tu.GDP complex and induces the exchange of GDP to GTP. It remains bound to the aminoacyl-tRNA.EF-Tu.GTP complex up to the GTP hydrolysis stage on the ribosome. The protein is Elongation factor Ts of Bradyrhizobium diazoefficiens (strain JCM 10833 / BCRC 13528 / IAM 13628 / NBRC 14792 / USDA 110).